A 380-amino-acid chain; its full sequence is MTPMRKTNPLMKLINHSLIDLPTPSNISAWWNFGSLLGACLIIQTITGLFLAMHYSPDATTAFSSIAHITRDVNYGWMIRHLHANGASMLFICLFLHIGRGLYYGSFTHLETWNIGIILLFMTMMTAFMGYVLPWGQMSFWGATVITNLLSAVPYIGTDLVQWVWGGYSVNSPTLTRFFTLHFMLPFIITALTTLHLLFLHETGSNNPLGIPSHSDKITFHPYYTIKDILGLLLFLLALMTLTLLSPDLLSDPDNYTLANPLSTPPHIKPEWYFLFAYAILRSVPNKLGGVMALMLSILILTTIPALHTSKQQSMTFRPLSQFLYWLLITDLLVLTWIGGQPVSYPFITIGQVASVLYFTTILLLMPTSSLIENYMLKWT.

The next 4 helical transmembrane spans lie at 33–53, 77–98, 113–133, and 178–198; these read FGSLLGACLIIQTITGLFLAM, WMIRHLHANGASMLFICLFLHI, WNIGIILLFMTMMTAFMGYVL, and FFTLHFMLPFIITALTTLHLL. 2 residues coordinate heme b: H83 and H97. Heme b contacts are provided by H182 and H196. Position 201 (H201) interacts with a ubiquinone. The next 4 helical transmembrane spans lie at 226–246, 288–308, 320–340, and 347–367; these read IKDILGLLLFLLALMTLTLLS, LGGVMALMLSILILTTIPALH, LSQFLYWLLITDLLVLTWIGG, and FITIGQVASVLYFTTILLLMP.

The protein belongs to the cytochrome b family. In terms of assembly, the cytochrome bc1 complex contains 11 subunits: 3 respiratory subunits (MT-CYB, CYC1 and UQCRFS1), 2 core proteins (UQCRC1 and UQCRC2) and 6 low-molecular weight proteins (UQCRH/QCR6, UQCRB/QCR7, UQCRQ/QCR8, UQCR10/QCR9, UQCR11/QCR10 and a cleavage product of UQCRFS1). This cytochrome bc1 complex then forms a dimer. Heme b is required as a cofactor.

It is found in the mitochondrion inner membrane. Component of the ubiquinol-cytochrome c reductase complex (complex III or cytochrome b-c1 complex) that is part of the mitochondrial respiratory chain. The b-c1 complex mediates electron transfer from ubiquinol to cytochrome c. Contributes to the generation of a proton gradient across the mitochondrial membrane that is then used for ATP synthesis. This chain is Cytochrome b (MT-CYB), found in Pongo pygmaeus (Bornean orangutan).